Reading from the N-terminus, the 1491-residue chain is Pleckstrin homology domain-containing family H member 2 (1491 aa).

Positions 19–177 (ALEAQLMKFR…ELQEKKISCV (159 aa)) form a coiled coil. Disordered regions lie at residues 232–435 (AEKP…PFQP), 506–546 (DDGL…LHRF), and 612–668 (SSSP…SDYA). The segment covering 253–264 (TSCSSEQNQKTR) has biased composition (polar residues). Residues 374 to 385 (KEQDSSSDELNK) are compositionally biased toward basic and acidic residues. The span at 392–406 (LDYTSSSSEANTPSP) shows a compositional bias: polar residues. The span at 657-666 (SDSSAASESD) shows a compositional bias: low complexity. PH domains follow at residues 702-796 (PLEK…SVLR) and 810-918 (KPAV…VAAG). The MyTH4 domain occupies 954-1109 (HSKEGILSPL…PSRMEILSTL (156 aa)). In terms of domain architecture, FERM spans 1120–1449 (FSIPVHFMNG…SYINSFHQQK (330 aa)). The tract at residues 1466 to 1491 (QAPQARVMGSQPPLSNSRPTKGPTLL) is disordered.

In terms of assembly, self-associates. Interacts with TGFB1I1. As to expression, expressed in the kidney and testis. Expressed in the kidney exclusively by glomerular podocytes.

It is found in the cytoplasm. Its subcellular location is the cytoskeleton. It localises to the cell membrane. The protein resides in the cell projection. The protein localises to the lamellipodium. In the kidney glomerulus may play a role in linking podocyte foot processes to the glomerular basement membrane. May be involved in stabilization of F-actin by attenuating its depolymerization. Can recruit TGFB1I1 from focal adhesions to podocyte lamellipodia. This is Pleckstrin homology domain-containing family H member 2 (Plekhh2) from Mus musculus (Mouse).